The sequence spans 339 residues: Phenylalanine--tRNA ligase alpha subunit (339 aa).

Glutamate 254 serves as a coordination point for Mg(2+).

It belongs to the class-II aminoacyl-tRNA synthetase family. Phe-tRNA synthetase alpha subunit type 1 subfamily. As to quaternary structure, tetramer of two alpha and two beta subunits. Mg(2+) serves as cofactor.

The protein localises to the cytoplasm. The catalysed reaction is tRNA(Phe) + L-phenylalanine + ATP = L-phenylalanyl-tRNA(Phe) + AMP + diphosphate + H(+). This chain is Phenylalanine--tRNA ligase alpha subunit, found in Clostridium perfringens (strain ATCC 13124 / DSM 756 / JCM 1290 / NCIMB 6125 / NCTC 8237 / Type A).